Consider the following 469-residue polypeptide: Transcription factor E2FB (469 aa).

2 disordered regions span residues 1-28 and 84-118; these read MSEEVPQQFPSSKRQLHPSLSSMKPPLV and QTPVSGKGGKAKKTSRSAKSNKSGTLASGSNAGSP. 2 stretches are compositionally biased toward polar residues: residues 8–22 and 100–118; these read QFPSSKRQLHPSLSS and SAKSNKSGTLASGSNAGSP. Residues 129–194 mediate DNA binding; sequence RYDSSLGLLT…TLKNRIQWKG (66 aa). Residues 202 to 246 are a coiled coil; it reads ETIESIANLQDEVQNLAAEEARLDDQIRESQERLTSLSEDENNKR. The interval 210-238 is leucine-zipper; it reads LQDEVQNLAAEEARLDDQIRESQERLTSL. The disordered stretch occupies residues 319–374; that stretch reads PQADEPSNVPDEPSNVPDVPSNLPSTSGLPENHDVSMPMKEESTERNMETQEVDDT. A compositionally biased stretch (basic and acidic residues) spans 349-374; the sequence is ENHDVSMPMKEESTERNMETQEVDDT. The tract at residues 403-419 is retinoblastoma protein binding; it reads DYWFRSEVGEVSITDMW. The disordered stretch occupies residues 426-469; it reads DWNQMITFDQDHAGPSDNKILEQPQTPSSPTPEESTATRSPTGS. Positions 447 to 469 are enriched in low complexity; it reads EQPQTPSSPTPEESTATRSPTGS.

Belongs to the E2F/DP family. In terms of assembly, heterodimer with DP proteins. Interacts (via dimerization domain) preferentially with DPA, but also with DPB. Interacts with PURA1 and retinoblastoma-related protein RBR1. Component of a DREAM-like complex which modulates a variety of developmentally regulated genes and of the mitotic genes in proliferating and differentiated cells. Interacts with MYB3R4 only at early stages of leaves development. Post-translationally, phosphorylated. As to expression, expressed in proliferating cells and several differentiated tissues. Detected in inflorescence and shoot apical meristems, cotyledonary vascular tissues, leaf primordia, young leaves, base of trichomes, central cylinder and elongation zone of roots, lateral root primordia, flowers, pistils of immature flowers and pollen grains.

The protein resides in the cytoplasm. Its subcellular location is the nucleus. Its function is as follows. Transcription activator that binds DNA cooperatively with DP proteins through the E2 recognition site, 5'-TTTC[CG]CGC-3' found in the promoter region of a number of genes whose products are involved in cell cycle regulation or in DNA replication. The binding of retinoblastoma-related proteins represses transactivation. Involved in the control of cell-cycle progression from G1 to S phase and from G2 to M phase. Stimulates cell proliferation and delays differentiation. Represses cell enlargement and endoreduplication in auxin-free conditions. The sequence is that of Transcription factor E2FB (E2FB) from Arabidopsis thaliana (Mouse-ear cress).